Reading from the N-terminus, the 291-residue chain is Bis(5'-nucleosyl)-tetraphosphatase, symmetrical (291 aa).

This sequence belongs to the Ap4A hydrolase family.

The enzyme catalyses P(1),P(4)-bis(5'-adenosyl) tetraphosphate + H2O = 2 ADP + 2 H(+). Its function is as follows. Hydrolyzes diadenosine 5',5'''-P1,P4-tetraphosphate to yield ADP. This Coxiella burnetii (strain RSA 331 / Henzerling II) protein is Bis(5'-nucleosyl)-tetraphosphatase, symmetrical.